A 100-amino-acid polypeptide reads, in one-letter code: NADH-quinone oxidoreductase subunit K (100 aa).

Helical transmembrane passes span 4-24 (LFHG…SLIV), 28-48 (ILFM…ALVV), and 60-80 (IMYI…LALL).

This sequence belongs to the complex I subunit 4L family. As to quaternary structure, NDH-1 is composed of 13 different subunits. Subunits NuoA, H, J, K, L, M, N constitute the membrane sector of the complex.

Its subcellular location is the cell membrane. The catalysed reaction is a quinone + NADH + 5 H(+)(in) = a quinol + NAD(+) + 4 H(+)(out). Functionally, NDH-1 shuttles electrons from NADH, via FMN and iron-sulfur (Fe-S) centers, to quinones in the respiratory chain. The immediate electron acceptor for the enzyme in this species is believed to be ubiquinone. Couples the redox reaction to proton translocation (for every two electrons transferred, four hydrogen ions are translocated across the cytoplasmic membrane), and thus conserves the redox energy in a proton gradient. The sequence is that of NADH-quinone oxidoreductase subunit K from Buchnera aphidicola subsp. Schizaphis graminum (strain Sg).